Here is a 196-residue protein sequence, read N- to C-terminus: Small ribosomal subunit protein uS5 (196 aa).

The 64-residue stretch at 17-80 (FEEKMLFVNR…AVARKNMITV (64 aa)) folds into the S5 DRBM domain. The segment at 164–196 (GTEVRPSLSSDSPAGRSATTEAGEGVADTGGMQ) is disordered. Residues 170-183 (SLSSDSPAGRSATT) show a composition bias toward polar residues.

It belongs to the universal ribosomal protein uS5 family. Part of the 30S ribosomal subunit. Contacts proteins S4 and S8.

Its function is as follows. With S4 and S12 plays an important role in translational accuracy. Functionally, located at the back of the 30S subunit body where it stabilizes the conformation of the head with respect to the body. This Deinococcus radiodurans (strain ATCC 13939 / DSM 20539 / JCM 16871 / CCUG 27074 / LMG 4051 / NBRC 15346 / NCIMB 9279 / VKM B-1422 / R1) protein is Small ribosomal subunit protein uS5.